Consider the following 210-residue polypeptide: Ribosomal RNA large subunit methyltransferase E (210 aa).

Residues glycine 67, tryptophan 69, aspartate 87, aspartate 103, and aspartate 128 each contribute to the S-adenosyl-L-methionine site. Lysine 168 (proton acceptor) is an active-site residue.

It belongs to the class I-like SAM-binding methyltransferase superfamily. RNA methyltransferase RlmE family.

It localises to the cytoplasm. It carries out the reaction uridine(2552) in 23S rRNA + S-adenosyl-L-methionine = 2'-O-methyluridine(2552) in 23S rRNA + S-adenosyl-L-homocysteine + H(+). Its function is as follows. Specifically methylates the uridine in position 2552 of 23S rRNA at the 2'-O position of the ribose in the fully assembled 50S ribosomal subunit. This is Ribosomal RNA large subunit methyltransferase E from Psychrobacter sp. (strain PRwf-1).